The following is a 772-amino-acid chain: Semaphorin-3A (772 aa).

Residues 1–22 (MGWLRGIALLSLGVLLAGRVNC) form the signal peptide. The Sema domain maps to 31–514 (RLKLSYKEML…SATGVSQLPL (484 aa)). N-linked (GlcNAc...) asparagine glycosylation occurs at asparagine 53. Cysteines 103 and 114 form a disulfide. An N-linked (GlcNAc...) asparagine glycan is attached at asparagine 125. 4 disulfide bridges follow: cysteine 132–cysteine 141, cysteine 269–cysteine 381, cysteine 293–cysteine 341, and cysteine 517–cysteine 535. The region spanning 576-665 (PSGQTLEEKI…GFIQTLLKVT (90 aa)) is the Ig-like C2-type domain. A glycan (N-linked (GlcNAc...) asparagine) is linked at asparagine 591. Cysteine 650 and cysteine 723 are disulfide-bonded. The segment at 730–772 (DRKQRRQRPANAQVNTNKWKHLQENKKGRNRRTHEFERAPRSV) is disordered. Over residues 750 to 772 (HLQENKKGRNRRTHEFERAPRSV) the composition is skewed to basic and acidic residues.

Belongs to the semaphorin family. In terms of tissue distribution, expressed at relatively high levels in brain and muscle, moderate levels in lung, bursa, and heart and virtually absent in liver. Collapsin-1, -2, -3, and -5 bind to overlapping but distinct axon tracts.

It is found in the secreted. Induces the collapse and paralysis of neuronal growth cones. Could serve as a ligand that guides specific growth cones by a motility-inhibiting mechanism. Binds to neuropilin. The protein is Semaphorin-3A (SEMA3A) of Gallus gallus (Chicken).